A 2036-amino-acid polypeptide reads, in one-letter code: Putative mediator of RNA polymerase II transcription subunit 24 (2036 aa).

Disordered stretches follow at residues 51 to 70, 159 to 184, 212 to 451, 501 to 580, 754 to 840, 928 to 1124, 1375 to 1419, and 1565 to 1608; these read NNNNSNNNNNNNNNNNNNNV, DNIENSNNNNNNNNNNNNNNSNNNIG, SPSP…QTTT, KSVN…NNNN, NLKN…SHQK, NNNN…NKDL, NNKN…NNNN, and NSSA…NGDT. Residues 212–229 show a composition bias toward low complexity; it reads SPSPSSSSSSSTSPSSQQ. A compositionally biased stretch (basic and acidic residues) spans 260–270; it reads EIMKVKEEPIK. Composition is skewed to low complexity over residues 273 to 291, 300 to 311, 387 to 451, 501 to 539, 547 to 580, and 754 to 770; these read TTTTTTSTTTTTSTTSTTT, TNGNGEETTITT, QPQP…QTTT, KSVNNNNNNNNNNNNNNNNNNNNNYNNNNNDSMDQNSNN, NNNNINNNNNNNNNNNNNNNNNNNNNNNNNNNNN, and NLKNNKNNNNNNNNSNG. Residues 505-584 are a coiled coil; that stretch reads NNNNNNNNNN…NNNNNNINNI (80 aa). Polar residues predominate over residues 778–787; sequence GSSTDGSNKL. Composition is skewed to low complexity over residues 788-808 and 928-943; these read SSTNIEEGNNNNNSSTHLNGN and NNNNNTNTNNINNNKN. A coiled-coil region spans residues 943–977; that stretch reads NKNSKKSNNKNKNNKNNNKKNKNNNNNNNNNNNNN. A compositionally biased stretch (basic residues) spans 944–964; sequence KNSKKSNNKNKNNKNNNKKNK. 5 stretches are compositionally biased toward low complexity: residues 965 to 999, 1017 to 1118, 1385 to 1419, 1565 to 1584, and 1594 to 1608; these read NNNNNNNNNNNNNNNNNNNNNNNNNNNNNNNNNNN, NNNN…NNNN, SNNSSNNSINNINNNNNNNNNNNNNNNNNNNNNNN, NSSAYSTTTTTSASTSLPKS, and SSNTSTTTTKNNGDT. Residues 1915–1968 adopt a coiled-coil conformation; it reads SKNQSLKKKQKLKQKKQQHNNNNGGEYNIDQDHIEQIQQQQQQYQKQQQQRKDE.

It belongs to the Mediator complex subunit 24 family. As to quaternary structure, component of the Mediator complex.

The protein resides in the nucleus. Functionally, component of the Mediator complex, a coactivator involved in the regulated transcription of nearly all RNA polymerase II-dependent genes. Mediator functions as a bridge to convey information from gene-specific regulatory proteins to the basal RNA polymerase II transcription machinery. Mediator is recruited to promoters by direct interactions with regulatory proteins and serves as a scaffold for the assembly of a functional preinitiation complex with RNA polymerase II and the general transcription factors. This is Putative mediator of RNA polymerase II transcription subunit 24 (med24) from Dictyostelium discoideum (Social amoeba).